Here is a 155-residue protein sequence, read N- to C-terminus: 3-hydroxyacyl-[acyl-carrier-protein] dehydratase FabZ (155 aa).

His-57 is an active-site residue.

Belongs to the thioester dehydratase family. FabZ subfamily.

Its subcellular location is the cytoplasm. The enzyme catalyses a (3R)-hydroxyacyl-[ACP] = a (2E)-enoyl-[ACP] + H2O. Its function is as follows. Involved in unsaturated fatty acids biosynthesis. Catalyzes the dehydration of short chain beta-hydroxyacyl-ACPs and long chain saturated and unsaturated beta-hydroxyacyl-ACPs. This Sorangium cellulosum (strain So ce56) (Polyangium cellulosum (strain So ce56)) protein is 3-hydroxyacyl-[acyl-carrier-protein] dehydratase FabZ.